Consider the following 299-residue polypeptide: HTH-type transcriptional regulator PgrR (299 aa).

One can recognise an HTH lysR-type domain in the interval 4-61; the sequence is EEIADLMAFVVVAEERSFTRAAARLSMAQSALSQIVRRIEERLGLRLLTRTTRSVVPT. A DNA-binding region (H-T-H motif) is located at residues 21–40; the sequence is FTRAAARLSMAQSALSQIVR.

This sequence belongs to the LysR transcriptional regulatory family.

Functionally, regulates the expression of genes involved in peptidoglycan (PG) degradation. Could play a role in switch control between recycling and degradation of PG peptides. Negatively regulates the expression of the ycjY-ymjD-ymjC-mpaA operon by binding to the PgrR-box. In addition, other genes are predicted to be under the control of PgrR, including genes related to membrane formation and function. The chain is HTH-type transcriptional regulator PgrR (pgrR) from Escherichia coli (strain K12).